Here is an 87-residue protein sequence, read N- to C-terminus: Small ribosomal subunit protein uS19 (87 aa).

The protein belongs to the universal ribosomal protein uS19 family.

Functionally, protein S19 forms a complex with S13 that binds strongly to the 16S ribosomal RNA. The chain is Small ribosomal subunit protein uS19 from Mesoplasma florum (strain ATCC 33453 / NBRC 100688 / NCTC 11704 / L1) (Acholeplasma florum).